The sequence spans 550 residues: CTP synthase (550 aa).

Residues 1 to 270 form an amidoligase domain region; that stretch reads MTKYVFVTGG…DRIICEELKL (270 aa). Serine 13 is a CTP binding site. Residue serine 13 coordinates UTP. ATP is bound by residues 14–19 and aspartate 71; that span reads SLGKGI. 2 residues coordinate Mg(2+): aspartate 71 and glutamate 144. CTP is bound by residues 151–153, 191–196, and lysine 227; these read DIE and KTKPTQ. UTP-binding positions include 191 to 196 and lysine 227; that span reads KTKPTQ. One can recognise a Glutamine amidotransferase type-1 domain in the interval 295–547; that stretch reads TIGMVGKYVD…VEAALANKQA (253 aa). Residue glycine 356 participates in L-glutamine binding. The Nucleophile; for glutamine hydrolysis role is filled by cysteine 383. L-glutamine is bound by residues 384–387, glutamate 407, and arginine 473; that span reads LGMQ. Catalysis depends on residues histidine 520 and glutamate 522.

This sequence belongs to the CTP synthase family. In terms of assembly, homotetramer.

The catalysed reaction is UTP + L-glutamine + ATP + H2O = CTP + L-glutamate + ADP + phosphate + 2 H(+). The enzyme catalyses L-glutamine + H2O = L-glutamate + NH4(+). It carries out the reaction UTP + NH4(+) + ATP = CTP + ADP + phosphate + 2 H(+). It functions in the pathway pyrimidine metabolism; CTP biosynthesis via de novo pathway; CTP from UDP: step 2/2. Allosterically activated by GTP, when glutamine is the substrate; GTP has no effect on the reaction when ammonia is the substrate. The allosteric effector GTP functions by stabilizing the protein conformation that binds the tetrahedral intermediate(s) formed during glutamine hydrolysis. Inhibited by the product CTP, via allosteric rather than competitive inhibition. Catalyzes the ATP-dependent amination of UTP to CTP with either L-glutamine or ammonia as the source of nitrogen. Regulates intracellular CTP levels through interactions with the four ribonucleotide triphosphates. In Burkholderia lata (strain ATCC 17760 / DSM 23089 / LMG 22485 / NCIMB 9086 / R18194 / 383), this protein is CTP synthase.